Here is a 103-residue protein sequence, read N- to C-terminus: Small ribosomal subunit protein uS14c (103 aa).

Belongs to the universal ribosomal protein uS14 family. Part of the 30S ribosomal subunit.

The protein localises to the plastid. The protein resides in the chloroplast. In terms of biological role, binds 16S rRNA, required for the assembly of 30S particles. The polypeptide is Small ribosomal subunit protein uS14c (Agrostis stolonifera (Creeping bentgrass)).